We begin with the raw amino-acid sequence, 235 residues long: Ubiquinone/menaquinone biosynthesis C-methyltransferase UbiE (235 aa).

S-adenosyl-L-methionine contacts are provided by Thr-60, Asp-81, and Ser-126.

It belongs to the class I-like SAM-binding methyltransferase superfamily. MenG/UbiE family.

The enzyme catalyses a 2-demethylmenaquinol + S-adenosyl-L-methionine = a menaquinol + S-adenosyl-L-homocysteine + H(+). The catalysed reaction is a 2-methoxy-6-(all-trans-polyprenyl)benzene-1,4-diol + S-adenosyl-L-methionine = a 5-methoxy-2-methyl-3-(all-trans-polyprenyl)benzene-1,4-diol + S-adenosyl-L-homocysteine + H(+). Its pathway is quinol/quinone metabolism; menaquinone biosynthesis; menaquinol from 1,4-dihydroxy-2-naphthoate: step 2/2. It participates in cofactor biosynthesis; ubiquinone biosynthesis. Its function is as follows. Methyltransferase required for the conversion of demethylmenaquinol (DMKH2) to menaquinol (MKH2) and the conversion of 2-polyprenyl-6-methoxy-1,4-benzoquinol (DDMQH2) to 2-polyprenyl-3-methyl-6-methoxy-1,4-benzoquinol (DMQH2). The sequence is that of Ubiquinone/menaquinone biosynthesis C-methyltransferase UbiE from Geobacter sp. (strain M21).